Reading from the N-terminus, the 821-residue chain is Phenylalanine--tRNA ligase beta subunit (821 aa).

Positions 39–149 (RTWAEGVVVG…DAVTVGEDVR (111 aa)) constitute a tRNA-binding domain. Residues 409-503 (PLERTLTLRL…RLYGYDRFEE (95 aa)) form the B5 domain. Positions 481, 487, 490, and 491 each coordinate Mg(2+). Residues 724 to 820 (STYPASDRDL…LVEKYAVTLR (97 aa)) enclose the FDX-ACB domain.

Belongs to the phenylalanyl-tRNA synthetase beta subunit family. Type 1 subfamily. As to quaternary structure, tetramer of two alpha and two beta subunits. The cofactor is Mg(2+).

The protein resides in the cytoplasm. It catalyses the reaction tRNA(Phe) + L-phenylalanine + ATP = L-phenylalanyl-tRNA(Phe) + AMP + diphosphate + H(+). The protein is Phenylalanine--tRNA ligase beta subunit of Thermosynechococcus vestitus (strain NIES-2133 / IAM M-273 / BP-1).